A 334-amino-acid polypeptide reads, in one-letter code: GTP 3',8-cyclase (334 aa).

Residues 11–236 (GFNRKIDYLR…ESTESSMGPA (226 aa)) form the Radical SAM core domain. R20 lines the GTP pocket. The [4Fe-4S] cluster site is built by C27 and C31. Y33 contributes to the S-adenosyl-L-methionine binding site. Position 34 (C34) interacts with [4Fe-4S] cluster. R69 is a GTP binding site. Residue G73 participates in S-adenosyl-L-methionine binding. T100 is a GTP binding site. Residue S124 participates in S-adenosyl-L-methionine binding. K161 contacts GTP. M195 serves as a coordination point for S-adenosyl-L-methionine. [4Fe-4S] cluster is bound by residues C260 and C263. 265-267 (RVR) lines the GTP pocket. C277 provides a ligand contact to [4Fe-4S] cluster.

This sequence belongs to the radical SAM superfamily. MoaA family. As to quaternary structure, monomer and homodimer. [4Fe-4S] cluster serves as cofactor.

It catalyses the reaction GTP + AH2 + S-adenosyl-L-methionine = (8S)-3',8-cyclo-7,8-dihydroguanosine 5'-triphosphate + 5'-deoxyadenosine + L-methionine + A + H(+). Its pathway is cofactor biosynthesis; molybdopterin biosynthesis. Catalyzes the cyclization of GTP to (8S)-3',8-cyclo-7,8-dihydroguanosine 5'-triphosphate. This Pseudomonas putida (strain ATCC 700007 / DSM 6899 / JCM 31910 / BCRC 17059 / LMG 24140 / F1) protein is GTP 3',8-cyclase.